Reading from the N-terminus, the 293-residue chain is Autophagy-related protein 36 (293 aa).

Polar residues-rich tracts occupy residues 98–108 and 260–273; these read ISSDSNKNSPP and GETL…ASSS. Disordered regions lie at residues 98-121 and 250-273; these read ISSD…NIRS and SRSR…ASSS.

Interacts with PEX3, ATG8 and ATG11.

The protein resides in the peroxisome. Its function is as follows. Required for autophagic breakdown of peroxisomes, called pexophagy, through linking peroxisomes to the autophagy apparatus. Involved in regulation of the glyoxylate cycle. This Saccharomyces cerevisiae (strain ATCC 204508 / S288c) (Baker's yeast) protein is Autophagy-related protein 36 (ATG36).